The primary structure comprises 156 residues: Small ribosomal subunit protein uS7 (156 aa).

The protein belongs to the universal ribosomal protein uS7 family. As to quaternary structure, part of the 30S ribosomal subunit. Contacts proteins S9 and S11.

Its function is as follows. One of the primary rRNA binding proteins, it binds directly to 16S rRNA where it nucleates assembly of the head domain of the 30S subunit. Is located at the subunit interface close to the decoding center, probably blocks exit of the E-site tRNA. The sequence is that of Small ribosomal subunit protein uS7 from Rhizobium etli (strain ATCC 51251 / DSM 11541 / JCM 21823 / NBRC 15573 / CFN 42).